The chain runs to 527 residues: MTTQAAEVAKRRTFAIISHPDAGKTTITEKLLLMGKAIAVAGTVKSRKSDRHATSDWMEMEKQRGISITTSVMQFPYREHMINLLDTPGHEDFSEDTYRTLTAVDSALMVLDGGKGVEPRTIALMDVCRLRDTPIVSFINKLDRDIRDPIELLDEIEAVLKIKAAPITWPIGCYRDFKGVYHLAEDRIIVFVPGHGHERIETRVIEKLDSDEARAHLGDMYDDFVEQLELVQGACHEFDKDAFLRGEMTPVFFGTALGNFGVDHVLDAVVDWAPKPLARVANERTVEPAEEKFTGFVFKIQANMDPKHRDRIAFMRICSGKYEKGMKMRHVRIKKDLKIADALTFFSSEREMLEEAWAGDIIGLHNHGTIQIGDTFTEGEVLGFTGIPHFAPELFRRVRLKDPLKSKQLRQGLQELAEEGATQVFFPERNNDIILGAVGVLQFDVVASRLKEEYKVECAYEAINVWSARWIECSDEKKLKEFKDKAYENLAVDGGGHLTYLAPTRVNLSLMEERWPEVKFRATREHH.

The region spanning 9–277 (AKRRTFAIIS…AVVDWAPKPL (269 aa)) is the tr-type G domain. GTP is bound by residues 18-25 (SHPDAGKT), 86-90 (DTPGH), and 140-143 (NKLD).

This sequence belongs to the TRAFAC class translation factor GTPase superfamily. Classic translation factor GTPase family. PrfC subfamily.

The protein localises to the cytoplasm. Increases the formation of ribosomal termination complexes and stimulates activities of RF-1 and RF-2. It binds guanine nucleotides and has strong preference for UGA stop codons. It may interact directly with the ribosome. The stimulation of RF-1 and RF-2 is significantly reduced by GTP and GDP, but not by GMP. This is Peptide chain release factor 3 from Stutzerimonas stutzeri (strain A1501) (Pseudomonas stutzeri).